We begin with the raw amino-acid sequence, 351 residues long: Putative F-box protein At4g09790 (351 aa).

Residues 1–51 (MTTICDLPRDLVARILSRVPLTSMRRVRFTCKRWNTISKDPSFAKTHFGKA) enclose the F-box domain.

This is Putative F-box protein At4g09790 from Arabidopsis thaliana (Mouse-ear cress).